The sequence spans 643 residues: Threonine--tRNA ligase (643 aa).

Positions 1–61 (MPIITLPDGS…TEDSTLEIIT (61 aa)) constitute a TGS domain. Residues 243–534 (DHRKIGKALD…ITEEYAGFFP (292 aa)) form a catalytic region. Positions 334, 385, and 511 each coordinate Zn(2+).

Belongs to the class-II aminoacyl-tRNA synthetase family. In terms of assembly, homodimer. Requires Zn(2+) as cofactor.

The protein resides in the cytoplasm. The enzyme catalyses tRNA(Thr) + L-threonine + ATP = L-threonyl-tRNA(Thr) + AMP + diphosphate + H(+). In terms of biological role, catalyzes the attachment of threonine to tRNA(Thr) in a two-step reaction: L-threonine is first activated by ATP to form Thr-AMP and then transferred to the acceptor end of tRNA(Thr). Also edits incorrectly charged L-seryl-tRNA(Thr). This is Threonine--tRNA ligase from Mannheimia succiniciproducens (strain KCTC 0769BP / MBEL55E).